Consider the following 105-residue polypeptide: Large ribosomal subunit protein uL24 (105 aa).

The protein belongs to the universal ribosomal protein uL24 family. Part of the 50S ribosomal subunit.

Functionally, one of two assembly initiator proteins, it binds directly to the 5'-end of the 23S rRNA, where it nucleates assembly of the 50S subunit. One of the proteins that surrounds the polypeptide exit tunnel on the outside of the subunit. This is Large ribosomal subunit protein uL24 from Vibrio parahaemolyticus serotype O3:K6 (strain RIMD 2210633).